The following is a 602-amino-acid chain: Leucine-rich repeat-containing protein 40 (602 aa).

A disordered region spans residues 1–22 (MSRLKRIAGQDPRAGFKEGGRD). At Ser-71 the chain carries Phosphoserine. LRR repeat units follow at residues 83 to 104 (DLTK…LRLL), 106 to 127 (ALTV…IREL), 129 to 150 (NLQK…ITNL), 152 to 173 (NLKC…FEQF), 175 to 196 (NLED…FSSL), 198 to 219 (SLVR…INRM), 221 to 242 (RLKH…LAGM), 244 to 265 (SLEL…PSCS), 266 to 286 (LLKE…EHLK), 290 to 311 (SILV…IILL), 313 to 335 (SLER…GNLH), 336 to 356 (LKFL…IINK), 400 to 421 (TLKI…VFDA), 426 to 447 (IITS…MVEL), 450 to 472 (MVSD…CVLQ), 473 to 494 (KLTF…VESL), 496 to 517 (RLQT…LYRI), 519 to 540 (TLET…KMKM), 543 to 564 (NLTT…LGNC), and 566 to 586 (NLRT…AILM).

The protein is Leucine-rich repeat-containing protein 40 (LRRC40) of Pongo abelii (Sumatran orangutan).